The primary structure comprises 421 residues: Heterogeneous nuclear ribonucleoprotein 27C (421 aa).

RRM domains are found at residues glycine 7 to glutamine 88 and tyrosine 96 to proline 173. Disordered regions lie at residues alanine 171–tyrosine 191 and glycine 240–aspartate 373. Serine 177 carries the post-translational modification Phosphoserine. Positions glycine 240–tyrosine 250 are enriched in polar residues. The span at proline 264–glutamine 273 shows a compositional bias: pro residues. Residues serine 275 to glutamine 284 show a composition bias toward polar residues. Low complexity predominate over residues asparagine 293–glycine 302. Residues serine 366, serine 368, and serine 370 each carry the phosphoserine modification. Tyrosine 372 bears the Phosphotyrosine mark. A Phosphoserine modification is found at serine 379. The interval glutamate 392–valine 421 is disordered. Positions glycine 406–valine 421 are enriched in polar residues.

In terms of assembly, interacts with sqd; the interaction is RNA-dependent and may be specific for sqd isoform A/sqdA. Interacts with otu; the interaction is RNA-independent.

Its subcellular location is the nucleus. The protein localises to the cytoplasm. Functionally, this protein is a component of ribonucleosomes. Could be needed to organize a concentration gradient of a dorsalizing morphogen (Dm) originating in the germinal vesicle. Interacts with grk mRNA (via 3' UTR) and involved in its localization to the dorsal anterior region of the oocyte during dorsal-ventral axis determination; may function as a ribonuclear protein complex together with sqd and otu. Required for polytene chromosome dispersal in nurse cells during oogenesis. May be involved in the regulation of splicing. The protein is Heterogeneous nuclear ribonucleoprotein 27C of Drosophila melanogaster (Fruit fly).